The primary structure comprises 301 residues: Cell division control protein 2 homolog 1 (301 aa).

The Protein kinase domain maps to 5-297; that stretch reads YQRLEKIGEG…AAQALEHPYF (293 aa). Residues 11 to 19 and Lys-34 each bind ATP; that span reads IGEGSYGVV. Residue Ser-15 is modified to Phosphoserine. Tyr-16 carries the post-translational modification Phosphotyrosine. The Proton acceptor role is filled by Asp-127. A Phosphothreonine; by CAK modification is found at Thr-160.

This sequence belongs to the protein kinase superfamily. CMGC Ser/Thr protein kinase family. CDC2/CDKX subfamily. Forms a stable but non-covalent complex with a regulatory subunit and with a cyclin.

The enzyme catalyses L-seryl-[protein] + ATP = O-phospho-L-seryl-[protein] + ADP + H(+). It carries out the reaction L-threonyl-[protein] + ATP = O-phospho-L-threonyl-[protein] + ADP + H(+). Its activity is regulated as follows. Phosphorylation at Ser-15 or Tyr-16 inactivates the enzyme, while phosphorylation at Thr-160 activates it. Functionally, probably involved in the control of the cell cycle. The protein is Cell division control protein 2 homolog 1 (CRK1) of Trypanosoma congolense.